Here is a 420-residue protein sequence, read N- to C-terminus: UDP-N-acetylglucosamine 1-carboxyvinyltransferase 2 (420 aa).

Phosphoenolpyruvate is bound at residue 22–23 (KN). Arginine 92 contacts UDP-N-acetyl-alpha-D-glucosamine. Cysteine 116 functions as the Proton donor in the catalytic mechanism. Cysteine 116 carries the post-translational modification 2-(S-cysteinyl)pyruvic acid O-phosphothioketal. Residues 121-125 (RPIDL), aspartate 307, and isoleucine 329 contribute to the UDP-N-acetyl-alpha-D-glucosamine site.

This sequence belongs to the EPSP synthase family. MurA subfamily.

It is found in the cytoplasm. It carries out the reaction phosphoenolpyruvate + UDP-N-acetyl-alpha-D-glucosamine = UDP-N-acetyl-3-O-(1-carboxyvinyl)-alpha-D-glucosamine + phosphate. Its pathway is cell wall biogenesis; peptidoglycan biosynthesis. In terms of biological role, cell wall formation. Adds enolpyruvyl to UDP-N-acetylglucosamine. The polypeptide is UDP-N-acetylglucosamine 1-carboxyvinyltransferase 2 (Streptococcus thermophilus (strain CNRZ 1066)).